The sequence spans 320 residues: Malate dehydrogenase (320 aa).

NAD(+) is bound by residues 10–15 (GAGMIG) and Asp-34. Positions 83 and 89 each coordinate substrate. NAD(+) contacts are provided by residues Asn-96 and 119-121 (ITN). Residues Asn-121 and Arg-152 each contribute to the substrate site. The active-site Proton acceptor is His-176.

It belongs to the LDH/MDH superfamily. MDH type 3 family.

The catalysed reaction is (S)-malate + NAD(+) = oxaloacetate + NADH + H(+). In terms of biological role, catalyzes the reversible oxidation of malate to oxaloacetate. The chain is Malate dehydrogenase from Caulobacter sp. (strain K31).